A 782-amino-acid chain; its full sequence is Host cell factor homolog hcf-1 (782 aa).

The tract at residues 1–25 is disordered; it reads MDEDVGLEATNYSRGDESRSEEQEK. The segment covering 14–25 has biased composition (basic and acidic residues); that stretch reads RGDESRSEEQEK. Kelch repeat units follow at residues 55–103, 105–151, 161–222, 227–271, and 280–324; these read LIVI…SLGN, IYRF…RIGH, KAYV…IYEK, RMVV…PRSL, and KMFV…VPLH. 3 positions are modified to phosphoserine: S423, S431, and S449. Polar residues predominate over residues 423 to 434; sequence SPIKRATTSPRK. Positions 423 to 553 are disordered; the sequence is SPIKRATTSP…EENGDDDLPW (131 aa). Polar residues-rich tracts occupy residues 456-469 and 496-513; these read TAPS…TTYT and TASP…SSTC. S498 carries the post-translational modification Phosphoserine. The segment covering 537–552 has biased composition (acidic residues); sequence GETDEMKEENGDDDLP.

As to quaternary structure, interacts with daf-16/FOXO. Interacts with deacetylase sir-2.1. Interacts with the 14-3-3 family proteins ftt-2 and par-5. In terms of processing, phosphorylated at multiple serine residues. Phosphorylation is developmentally regulated, occurring in embryos but not L1 larvae. Phosphorylation may be cell-cycle-regulated.

It localises to the nucleus. In terms of biological role, transcriptional coregulator. Involved in control of the cell cycle and in modulating mitotic histone phosphorylation. Plays a role in modulating lifespan by regulating the transcriptional activity of daf-16/Forkhead box protein O, in concert with protein deacetylase sir-2.1/SIRT1, and perhaps acting independently of the Insulin/IGF-1-like signaling (IIS) mediated pathway. Negatively modulates responses to environmental stresses, including oxidative stress, heat stress, and exposure to heavy metals; acting via regulation of the transcription factors daf-16 and skn-1. May play a role in pharyngeal development via positive modulation of expression of sup-35. This Caenorhabditis elegans protein is Host cell factor homolog hcf-1.